Reading from the N-terminus, the 1324-residue chain is Coiled-coil domain-containing protein 171 (1324 aa).

Coiled-coil stretches lie at residues 29-296 (KNET…RAAH), 325-393 (AEAV…RLQY), 453-521 (FSVV…KCAD), 599-712 (SELC…VREN), and 981-1145 (FTQR…KECV). Residues 1301–1312 (PHSLSSQSSPGV) are compositionally biased toward polar residues. Positions 1301–1324 (PHSLSSQSSPGVPTNAKRPSQIGL) are disordered.

This Mus musculus (Mouse) protein is Coiled-coil domain-containing protein 171 (Ccdc171).